The primary structure comprises 132 residues: NADH-quinone oxidoreductase subunit A 2 (132 aa).

Transmembrane regions (helical) follow at residues 9–29 (AWAF…MLGL), 66–86 (LVAM…LWAV), and 93–113 (WAGF…LFYL).

The protein belongs to the complex I subunit 3 family. NDH-1 is composed of 13 different subunits. Subunits NuoA, H, J, K, L, M, N constitute the membrane sector of the complex.

It is found in the cell inner membrane. It catalyses the reaction a quinone + NADH + 5 H(+)(in) = a quinol + NAD(+) + 4 H(+)(out). Its function is as follows. NDH-1 shuttles electrons from NADH, via FMN and iron-sulfur (Fe-S) centers, to quinones in the respiratory chain. The immediate electron acceptor for the enzyme in this species is believed to be ubiquinone. Couples the redox reaction to proton translocation (for every two electrons transferred, four hydrogen ions are translocated across the cytoplasmic membrane), and thus conserves the redox energy in a proton gradient. The sequence is that of NADH-quinone oxidoreductase subunit A 2 from Pseudomonas paraeruginosa (strain DSM 24068 / PA7) (Pseudomonas aeruginosa (strain PA7)).